The chain runs to 213 residues: Small ribosomal subunit protein uS5 (213 aa).

The interval 1–42 is disordered; it reads MSERDRNGGRSADNNRNDRNERGGRNDRGGRNDRRNNQQDER. Residues 45-108 enclose the S5 DRBM domain; the sequence is YIERVVTINR…EEARKNFFRV (64 aa).

This sequence belongs to the universal ribosomal protein uS5 family. Part of the 30S ribosomal subunit. Contacts proteins S4 and S8.

In terms of biological role, with S4 and S12 plays an important role in translational accuracy. Functionally, located at the back of the 30S subunit body where it stabilizes the conformation of the head with respect to the body. The polypeptide is Small ribosomal subunit protein uS5 (Corynebacterium urealyticum (strain ATCC 43042 / DSM 7109)).